The following is a 994-amino-acid chain: ASI1-immunoprecipitated protein 2 (994 aa).

Disordered regions lie at residues 39-182 (AEFS…SGEN) and 187-206 (KADE…NDPE). Residues 45–54 (KSDESSDENS) are compositionally biased toward basic and acidic residues. Residues 60–102 (SQCSFNGDNLLRSSGVNAPGSSHNTSSEASHLVNSNHDTSSEN) are compositionally biased toward polar residues. Basic and acidic residues-rich tracts occupy residues 119-140 (LLDR…DHQA) and 148-163 (KVKE…EKKN). The PHD-type zinc-finger motif lies at 212-263 (VKVCDTCGDAGREDLLAICSRCSDGAEHTYCMRVMLKKVPKGYWLCEECKFA). Positions 215, 218, 230, 233, 239, 242, 257, and 260 each coordinate Zn(2+). 2 disordered regions span residues 342-567 (AHYS…NNKG) and 839-875 (CSNP…TDRT). The segment covering 371 to 384 (SFLKSNSFNSLSSR) has biased composition (low complexity). Composition is skewed to polar residues over residues 417–435 (VGKS…NCND) and 449–464 (TEAN…NSSI). Composition is skewed to basic and acidic residues over residues 469–478 (SPRDLKDLQS), 536–552 (PRSR…KDAV), and 858–875 (DTFR…TDRT).

In terms of assembly, component of the ASI1-AIPP1-EDM2 (AAE) RNA regulatory complex composed of at least AIPP1/EDM3, ASI1 and EDM2 and may contain CPL2, AIPP2 and AIPP3/BDT1. Part of the BAH-PHD bivalent histone reader complex that contains AIPP2, PAIPP2 and AIPP3/BDT1; the BAH-PHD module associates with CPL2 to form the BAH-PHD-CPL2 complex (BPC) for transcriptional repression. Binds directly to ASI1, AIPP3/BDT1 and CPL2 but not to PAIPP2. Expressed ubiquitously.

Its function is as follows. Together with AIPP3/BDT1 and PAIPP2, cooperates to form a BAH-PHD bivalent histone reader complex able to read histone H3 lysine 27 trimethylation (H3K27me3) and low-methylated H3K4 histone marks in order to regulate transcription, especially to prevent early flowering; promotes AIPP3/BDT1 binding to H3K27me3. CPL2 is subsequently recruited to form a BAH-PHD-CPL2 complex (BPC) in order to silence several H3K27me3 and low-methylated H3K4 enriched loci, including AGO5, via the phosphorylation state-dependent inhibition of Pol II release from the transcriptional start site (e.g. Ser5P-Pol II dephosphorylation). The BPC complex represses flowering by inhibiting the expression of several genes, including AGL6, FT, FUL and SOC1. Prevents the accumulation of intronic heterochromatin-containing genes (e.g. IBM1, At3g05410 and RPP7). The polypeptide is ASI1-immunoprecipitated protein 2 (Arabidopsis thaliana (Mouse-ear cress)).